The following is a 411-amino-acid chain: MNALAATSRNFKQAAKLLGLDSKLEKSLLIPFREIKVECTIPKDDGTLASYVGFRVQHDNARGPMKGGIRYHHEVDPDEVNALAQLMTWKTAVANIPYGGAKGGIGCSPGDLSISELERLTRVFTQKIHDLIGIHTDVPAPDMGTNSQTMAWILDEYSKFHGYSPAVVTGKPVDLGGSLGRDAATGRGVLFATEALLAEHGKGIAGQRFVIQGFGNVGSWAAQLISEAGGKVIAISDVTGAVKNSNGLDIAKLMKHSSENRGIKGFDGGDAIDPRSLLTEECDVLIPAALGGVINKDNANEIKAKYIIEAANHPTDPEADEILSKKGVLILPDILANSGGVTVSYFEWVQNIQGFMWDEEKVNNELKTYMTRGFRDVKEMCRSHHCDLRMGAFTLGVNRVARATVLRGWEA.

The N-terminal 18 residues, 1–18 (MNALAATSRNFKQAAKLL), are a transit peptide targeting the mitochondrion. Residue Lys102 is part of the active site.

Belongs to the Glu/Leu/Phe/Val dehydrogenases family.

The protein localises to the mitochondrion. The enzyme catalyses L-glutamate + NAD(+) + H2O = 2-oxoglutarate + NH4(+) + NADH + H(+). It carries out the reaction L-glutamate + NADP(+) + H2O = 2-oxoglutarate + NH4(+) + NADPH + H(+). In Oryza sativa subsp. indica (Rice), this protein is Glutamate dehydrogenase 1, mitochondrial (GDH1).